Here is a 245-residue protein sequence, read N- to C-terminus: Ribonuclease 3 (245 aa).

Residues 19–148 (FKVFQEKIGI…FIGALYLDQG (130 aa)) enclose the RNase III domain. Mg(2+) is bound at residue E61. Residue D65 is part of the active site. Mg(2+) is bound by residues D134 and E137. The active site involves E137. Residues 174–243 (DYKSQLQELI…AAEALKKLKE (70 aa)) form the DRBM domain.

This sequence belongs to the ribonuclease III family. As to quaternary structure, homodimer. The cofactor is Mg(2+).

It localises to the cytoplasm. It carries out the reaction Endonucleolytic cleavage to 5'-phosphomonoester.. Functionally, digests double-stranded RNA. Involved in the processing of primary rRNA transcript to yield the immediate precursors to the large and small rRNAs (23S and 16S). Processes some mRNAs, and tRNAs when they are encoded in the rRNA operon. Processes pre-crRNA and tracrRNA of type II CRISPR loci if present in the organism. This chain is Ribonuclease 3, found in Bacillus cereus (strain AH187).